We begin with the raw amino-acid sequence, 1369 residues long: MutS protein homolog 5 (1369 aa).

The tract at residues 138-190 (IYEDGTTEEGTSEDTVPTWDSSLAYSTDETTAEKEEKEEDEDDDDEGLPAKLN) is disordered. A compositionally biased stretch (acidic residues) spans 173 to 184 (EKEEDEDDDDEG). 639–646 (GPNACGKS) is a binding site for ATP. Disordered stretches follow at residues 880-915 (SMRN…SVLS), 935-1135 (KKKK…RSSN), 1153-1182 (LKSQ…HSQN), and 1248-1278 (NFIF…SSIS). The span at 884-894 (VSEEIEKERSE) shows a compositional bias: basic and acidic residues. Polar residues-rich tracts occupy residues 895–915 (ASTP…SVLS) and 941–950 (TGSSMESSMS). Positions 954–967 (FQEEDEGTEGEEDQ) are enriched in acidic residues. Residues 991–1003 (QSINSRHSFSTRT) show a composition bias toward polar residues. Residues 1024 to 1037 (STSTSSPGPSASKS) show a composition bias toward low complexity. Residues 1049–1065 (VKESQVLETPKQLSISS) are compositionally biased toward polar residues. The span at 1073 to 1084 (SSEKDVISRVSE) shows a compositional bias: basic and acidic residues. Composition is skewed to polar residues over residues 1111–1124 (KNRS…QSAR) and 1153–1167 (LKSQ…TPRS). Over residues 1254 to 1263 (PEPRSSEKQR) the composition is skewed to basic and acidic residues.

Belongs to the DNA mismatch repair MutS family. In terms of assembly, heterooligomer of him-14 and msh-5. Interacts with the brc-1-brd-1 heterodimer. As to expression, expressed in the germline.

Its subcellular location is the chromosome. In terms of biological role, crucial component in meiotic recombination, functioning at some point after the initiation step of recombination. Plays a role in promoting the crossover outcome of meiotic recombination events. Required for formation of normal meiotic crossover, and crossover and chiasmata generated by artificially made DNA breaks. Together with him-14 and zhp-3 plays a role in the activation of DNA damage-dependent apoptosis at the DNA damage checkpoint in pachytene cells. The chain is MutS protein homolog 5 from Caenorhabditis elegans.